A 201-amino-acid chain; its full sequence is Fimbrial protein FimX (201 aa).

The first 21 residues, 1–21, serve as a signal peptide directing secretion; the sequence is MQAKTFLLGAALAGVALAAHA. A disulfide bridge connects residues Cys-37 and Cys-79.

It belongs to the fimbrial protein family.

The protein resides in the fimbrium. Functionally, bordetella pertussis is the causative agent of whooping cough. An essential step in the disease process is the attachment of the bacteria to the ciliated epithelium of the respiratory tract, enabling the organism to resist normal host-clearance mechanisms. It is unclear which bacterial cell surface component are responsible for adherence but the fimbriae of B.pertussis are prime candidates for being involved in this process. The polypeptide is Fimbrial protein FimX (fimX) (Bordetella pertussis (strain Tohama I / ATCC BAA-589 / NCTC 13251)).